The primary structure comprises 287 residues: MFFICFNKKSNVVGLQISKCSGEFCIYREPKDKTYWNNFYYMSFYVNNKKVGVNCNITDIEYSLLDIFLHGPFQVNLSEYLNVCDCVNKRFLKYERMLKEKVVNGININFSLCENKNSLVFLDNYNLQEYLGPNNVLYVFVNSVLMDKKYFSREIRNKDFWNEWRCTKMPLYVNSKRVGKFYYYSEYVLHSLPGEEPNVLEYFVLDLFLFGPVEIEVSEYEKRTKQREYNTSLYLYLYKMDLISGVNIIFDEKTTDYSKILQTQFQTYHNLDDDRILNVCVITRMRL.

It belongs to the A.longa ORF167/ORF288 family.

The protein localises to the plastid. This is an uncharacterized protein from Euglena longa (Euglenophycean alga).